A 312-amino-acid chain; its full sequence is Small kinetochore-associated protein (312 aa).

A compositionally biased stretch (basic and acidic residues) spans 1-13 (MATHKAEAQETDF). 3 disordered regions span residues 1 to 32 (MATHKAEAQETDFRTTGPPTDLEQCPFPPSSR), 55 to 176 (LKRS…KDKN), and 221 to 242 (KGLNSGQETQESKQEPSTDPTD). Polar residues predominate over residues 75–84 (RPTTMASSKT). Composition is skewed to basic and acidic residues over residues 131-143 (DVTKVTKPRRENG) and 166-176 (QKPEEDLKDKN). Residues 156–312 (IRSSYKPLSK…LEEMEQLLEM (157 aa)) form an interaction with SPAG5 region. Residues 169 to 210 (EEDLKDKNELLEAVNKQLHQKLTETQGELKDLTQKVELLEKF) adopt a coiled-coil conformation. The stretch at 246 to 288 (LLETLKDELKLFNETAKKQMEELQALKVKLKLKEKERIQFLEQ) forms a coiled coil.

As to quaternary structure, part of an astrin (SPAG5)-kinastrin (SKAP) complex containing KNSTRN, SPAG5, PLK1, DYNLL1 and SGO2. Interacts with SPAG5. Directly binds to microtubules, although at relatively low affinity. Interacts with CENPE; this interaction greatly favors microtubule-binding. Interacts with DSN1/MIS13; leading to localization to kinetochores. Interacts with MAPRE1/EB1; leading to localization to the microtubule plus ends. Interacts with PRPF19. Interacts with DYNLL1. Interacts with MAP4.

The protein resides in the nucleus. The protein localises to the chromosome. Its subcellular location is the centromere. It is found in the kinetochore. It localises to the cytoplasm. The protein resides in the cytoskeleton. The protein localises to the spindle pole. Its subcellular location is the microtubule organizing center. Essential component of the mitotic spindle required for faithful chromosome segregation and progression into anaphase. Promotes the metaphase-to-anaphase transition and is required for chromosome alignment, normal timing of sister chromatid segregation, and maintenance of spindle pole architecture. The astrin (SPAG5)-kinastrin (SKAP) complex promotes stable microtubule-kinetochore attachments. Required for kinetochore oscillations and dynamics of microtubule plus-ends during live cell mitosis, possibly by forming a link between spindle microtubule plus-ends and mitotic chromosomes to achieve faithful cell division. This is Small kinetochore-associated protein (Knstrn) from Rattus norvegicus (Rat).